A 147-amino-acid polypeptide reads, in one-letter code: D-aminoacyl-tRNA deacylase (147 aa).

The short motif at 136 to 137 is the Gly-cisPro motif, important for rejection of L-amino acids element; the sequence is GP.

It belongs to the DTD family. As to quaternary structure, homodimer.

Its subcellular location is the cytoplasm. The catalysed reaction is glycyl-tRNA(Ala) + H2O = tRNA(Ala) + glycine + H(+). It catalyses the reaction a D-aminoacyl-tRNA + H2O = a tRNA + a D-alpha-amino acid + H(+). Functionally, an aminoacyl-tRNA editing enzyme that deacylates mischarged D-aminoacyl-tRNAs. Also deacylates mischarged glycyl-tRNA(Ala), protecting cells against glycine mischarging by AlaRS. Acts via tRNA-based rather than protein-based catalysis; rejects L-amino acids rather than detecting D-amino acids in the active site. By recycling D-aminoacyl-tRNA to D-amino acids and free tRNA molecules, this enzyme counteracts the toxicity associated with the formation of D-aminoacyl-tRNA entities in vivo and helps enforce protein L-homochirality. The chain is D-aminoacyl-tRNA deacylase from Streptococcus pneumoniae (strain P1031).